The sequence spans 211 residues: Uracil phosphoribosyltransferase (211 aa).

5-phospho-alpha-D-ribose 1-diphosphate is bound by residues Arg-78, Arg-103, and 130–138 (DPMLATGGT). Residues Ile-195 and 200-202 (GDA) each bind uracil. Asp-201 is a 5-phospho-alpha-D-ribose 1-diphosphate binding site.

This sequence belongs to the UPRTase family. Requires Mg(2+) as cofactor.

The enzyme catalyses UMP + diphosphate = 5-phospho-alpha-D-ribose 1-diphosphate + uracil. The protein operates within pyrimidine metabolism; UMP biosynthesis via salvage pathway; UMP from uracil: step 1/1. Its activity is regulated as follows. Allosterically activated by GTP. Functionally, catalyzes the conversion of uracil and 5-phospho-alpha-D-ribose 1-diphosphate (PRPP) to UMP and diphosphate. The protein is Uracil phosphoribosyltransferase of Streptomyces griseus subsp. griseus (strain JCM 4626 / CBS 651.72 / NBRC 13350 / KCC S-0626 / ISP 5235).